The primary structure comprises 299 residues: uncharacterized protein (299 aa).

A helical transmembrane segment spans residues 4–20; sequence LFFIFVMLIVLLCGCTS.

The protein resides in the membrane. This is an uncharacterized protein from Methanocaldococcus jannaschii (strain ATCC 43067 / DSM 2661 / JAL-1 / JCM 10045 / NBRC 100440) (Methanococcus jannaschii).